The primary structure comprises 205 residues: Holliday junction branch migration complex subunit RuvA (205 aa).

The tract at residues 1-64 is domain I; the sequence is MIGKLKGVID…EDMIRLYGFA (64 aa). A domain II region spans residues 65-143; it reads TQLEREWFRL…AFAGEASGTI (79 aa). Residues 144–152 form a flexible linker region; it reads GLKQELGAG. The domain III stretch occupies residues 153 to 205; it reads AAPAPVADAVSALSNLGYSRDQAANAVAAALKETGEGADSAKLIRLGLKELSQ.

Belongs to the RuvA family. In terms of assembly, homotetramer. Forms an RuvA(8)-RuvB(12)-Holliday junction (HJ) complex. HJ DNA is sandwiched between 2 RuvA tetramers; dsDNA enters through RuvA and exits via RuvB. An RuvB hexamer assembles on each DNA strand where it exits the tetramer. Each RuvB hexamer is contacted by two RuvA subunits (via domain III) on 2 adjacent RuvB subunits; this complex drives branch migration. In the full resolvosome a probable DNA-RuvA(4)-RuvB(12)-RuvC(2) complex forms which resolves the HJ.

The protein resides in the cytoplasm. Functionally, the RuvA-RuvB-RuvC complex processes Holliday junction (HJ) DNA during genetic recombination and DNA repair, while the RuvA-RuvB complex plays an important role in the rescue of blocked DNA replication forks via replication fork reversal (RFR). RuvA specifically binds to HJ cruciform DNA, conferring on it an open structure. The RuvB hexamer acts as an ATP-dependent pump, pulling dsDNA into and through the RuvAB complex. HJ branch migration allows RuvC to scan DNA until it finds its consensus sequence, where it cleaves and resolves the cruciform DNA. This chain is Holliday junction branch migration complex subunit RuvA, found in Brucella abortus (strain S19).